Reading from the N-terminus, the 274-residue chain is Acetyl-coenzyme A carboxylase carboxyl transferase subunit alpha (274 aa).

In terms of domain architecture, CoA carboxyltransferase C-terminal spans 2–250 (NKEFIKSIVV…KKELMNAMNE (249 aa)).

Belongs to the AccA family. As to quaternary structure, acetyl-CoA carboxylase is a heterohexamer composed of biotin carboxyl carrier protein (AccB), biotin carboxylase (AccC) and two subunits each of ACCase subunit alpha (AccA) and ACCase subunit beta (AccD).

It localises to the cytoplasm. The enzyme catalyses N(6)-carboxybiotinyl-L-lysyl-[protein] + acetyl-CoA = N(6)-biotinyl-L-lysyl-[protein] + malonyl-CoA. It functions in the pathway lipid metabolism; malonyl-CoA biosynthesis; malonyl-CoA from acetyl-CoA: step 1/1. Its function is as follows. Component of the acetyl coenzyme A carboxylase (ACC) complex. First, biotin carboxylase catalyzes the carboxylation of biotin on its carrier protein (BCCP) and then the CO(2) group is transferred by the carboxyltransferase to acetyl-CoA to form malonyl-CoA. This chain is Acetyl-coenzyme A carboxylase carboxyl transferase subunit alpha, found in Clostridium botulinum (strain Eklund 17B / Type B).